A 184-amino-acid chain; its full sequence is Photosystem I assembly protein Ycf4 (184 aa).

2 consecutive transmembrane segments (helical) span residues 21–43 (NFCWAAILLFGALGFFFVGISSY) and 68–90 (FYGIAGLFLSFYLWCTIFWNVGS).

It belongs to the Ycf4 family.

The protein resides in the plastid. It localises to the chloroplast thylakoid membrane. Seems to be required for the assembly of the photosystem I complex. The chain is Photosystem I assembly protein Ycf4 from Physcomitrium patens (Spreading-leaved earth moss).